We begin with the raw amino-acid sequence, 265 residues long: Bradykinin-potentiating and C-type natriuretic peptides (265 aa).

The first 23 residues, 1–23 (MVLSRLAASGLLLLALLALSVDG), serve as a signal peptide directing secretion. The propeptide occupies 24 to 30 (KPVQQWA). Glutamine 31 bears the Pyrrolidone carboxylic acid mark. A propeptide spanning residues 44–50 (LKVQQWA) is cleaved from the precursor. Position 51 is a pyrrolidone carboxylic acid (glutamine 51). A propeptide spanning residues 64–70 (LTVQQWA) is cleaved from the precursor. The residue at position 71 (glutamine 71) is a Pyrrolidone carboxylic acid. Positions 81–87 (LTVQQWA) are excised as a propeptide. Position 88 is a pyrrolidone carboxylic acid (glutamine 88). Positions 100–106 (LEVQQWA) are excised as a propeptide. At glutamine 107 the chain carries Pyrrolidone carboxylic acid. Residues 118–120 (APL) constitute a propeptide that is removed on maturation. Glutamine 121 is modified (pyrrolidone carboxylic acid). Valine 126 is a propeptide. Position 127 is a pyrrolidone carboxylic acid (glutamine 127). A propeptide spanning residues 132–241 (LLQPHESPAS…GGARRLKGLA (110 aa)) is cleaved from the precursor. The segment at 153–211 (GPEAASGVPSAGAEVGRSGSKAPAAPHRLSKSKGAAATSAASRPMRDLRPDGKQARQNW) is disordered. Positions 184 to 194 (SKGAAATSAAS) are enriched in low complexity. A compositionally biased stretch (basic and acidic residues) spans 196-206 (PMRDLRPDGKQ). Cysteines 249 and 265 form a disulfide.

The protein in the N-terminal section; belongs to the bradykinin-potentiating peptide family. This sequence in the C-terminal section; belongs to the natriuretic peptide family. In terms of tissue distribution, expressed by the venom gland.

It is found in the secreted. It localises to the cytoplasm. Its subcellular location is the cytosol. Functionally, modestly inhibits ACE (with highest affinity for the N-site) and reveals strong bradykinin-potentiating activity. Induces nitric oxide (NO) production depended on muscarinic acetylcholine receptor M1 subtype (CHRM1) and bradykinin B2 receptor (BDKRB2) activation. Both these receptors contribute to the vasodilation induced by this peptide that may have an indirect action on BDKRB2 and a direct agonistic action on CHRM1. In terms of biological role, peptide with several activities. It inhibits the activity of the angiotensin-converting enzyme (ACE) by a preferential interaction with its C-domain. It evokes transient hypotension (-14 mmHg) similar to that evoked by 0.5 ug of bradykinin, when injected alone into rats. It has a high bradykinin-potentiating effect (120%), when 60 nmol of BPP-10c are coinjected with 0.5 ug of bradykinin into rats. Does not affect angiotensin-1 pressor effects. Shows potent and long-lasting antihypertensive activity as well as a reduction of the heart rate. It also binds and dose-dependently promotes the activation of cytosolic argininosuccinate synthase (ASS1), an enzyme that catalyzes the conversion of citrulline, L-aspartate and ATP to argininosuccinate, AMP and pyrophosphate. It also enhances ASS1-dependent arginine production in HEK 293 cells, as well as in spontaneous hypertensive rat (SHR) and Wistar rat plasma. In addition, it induces the production of nitric-oxide (NO) by HUVEC cells via the endothelial nitric-oxide synthase (NOS3), which use arginine as a substrate and produce NO. It has been shown to be internalized by ASS1-expressing endothelial (HUVEC) and kidney (HEK 293) cells, and is detected homogenously distributed within the cell cytoplasm for up to 2 hours. Its function is as follows. has a vasorelaxant activity in rat aortic strips and a diuretic potency in anesthetized rats. May act by activating natriuretic receptors (NPR1 and/or NPR2). This Bothrops insularis (Golden lancehead) protein is Bradykinin-potentiating and C-type natriuretic peptides.